A 242-amino-acid chain; its full sequence is DnaJ homolog subfamily B member 6 (242 aa).

Residues 3-69 (EYYDVLGVQR…KKRDIYDKYG (67 aa)) enclose the J domain.

In terms of assembly, homooligomer.

The protein resides in the cytoplasm. Its subcellular location is the perinuclear region. It localises to the nucleus. Has a stimulatory effect on the ATPase activity of HSP70 in a dose-dependent and time-dependent manner and hence acts as a co-chaperone of HSP70. Plays an indispensable role in the organization of KRT8/KRT18 filaments. Acts as an endogenous molecular chaperone for neuronal proteins including huntingtin. Suppresses aggregation and toxicity of polyglutamine-containing, aggregation-prone proteins. Also reduces cellular toxicity and caspase-3 activity. The sequence is that of DnaJ homolog subfamily B member 6 from Xenopus tropicalis (Western clawed frog).